Here is a 511-residue protein sequence, read N- to C-terminus: Maturase K (511 aa).

It belongs to the intron maturase 2 family. MatK subfamily.

The protein localises to the plastid. It is found in the chloroplast. Usually encoded in the trnK tRNA gene intron. Probably assists in splicing its own and other chloroplast group II introns. The protein is Maturase K of Psathyrostachys juncea (Russian wildrye).